A 236-amino-acid chain; its full sequence is Eukaryotic translation initiation factor 3 subunit J (236 aa).

The tract at residues 1 to 84 is disordered; it reads MADDWESAAD…LREEEAEAER (84 aa). A compositionally biased stretch (acidic residues) spans 28 to 46; sequence GEDEDEDIKDSWEDEEEKK. 2 stretches are compositionally biased toward basic and acidic residues: residues 47–58 and 68–77; these read DEEKPTKTEAPA and AKLEQQALRE.

It belongs to the eIF-3 subunit J family. As to quaternary structure, component of the eukaryotic translation initiation factor 3 (eIF-3) complex. The eIF-3 complex interacts with pix.

The protein localises to the cytoplasm. In terms of biological role, component of the eukaryotic translation initiation factor 3 (eIF-3) complex, which is involved in protein synthesis of a specialized repertoire of mRNAs and, together with other initiation factors, stimulates binding of mRNA and methionyl-tRNAi to the 40S ribosome. The eIF-3 complex specifically targets and initiates translation of a subset of mRNAs involved in cell proliferation. This chain is Eukaryotic translation initiation factor 3 subunit J, found in Drosophila sechellia (Fruit fly).